We begin with the raw amino-acid sequence, 434 residues long: MSNFSPREIVSELDRFIIGQKDAKRAVAIALRNRWRRQQLEGQMREEVMPKNILMIGPTGVGKTEISRRLAKLAGAPFVKVEATKFTEVGYVGRDVEQIIRDLVEIAITLVREKRREDVKAKAHLNAEERVLDALVGKTASPVTRDSFRKKLRNGEMDDKEIEIEVSDSGASPNFEIPGMPGANIGVLNISDMLGKAMGGRTKTRKTTVKDSYPILINDESDKLLDQDQIVQEALRVSEDEGIVFIDEIDKIAAREGGSGAGVSREGVQRDLLPLVEGTTVATKYGPVKTDHILFITSGAFHVSKPSDLLPELQGRLPIRVELSALTREDFRRILTETEASLIKQYIALMETEEVKLEFSDDAIDALADIAVDLNATVENIGARRLQTVMEKVLDEISFTAPDKAGATFIIDAAYVKEKIGGLAKNTDLSRFIL.

Residues isoleucine 18, 60–65 (GVGKTE), aspartate 247, glutamate 312, and arginine 384 contribute to the ATP site.

The protein belongs to the ClpX chaperone family. HslU subfamily. A double ring-shaped homohexamer of HslV is capped on each side by a ring-shaped HslU homohexamer. The assembly of the HslU/HslV complex is dependent on binding of ATP.

The protein resides in the cytoplasm. Its function is as follows. ATPase subunit of a proteasome-like degradation complex; this subunit has chaperone activity. The binding of ATP and its subsequent hydrolysis by HslU are essential for unfolding of protein substrates subsequently hydrolyzed by HslV. HslU recognizes the N-terminal part of its protein substrates and unfolds these before they are guided to HslV for hydrolysis. The sequence is that of ATP-dependent protease ATPase subunit HslU from Brucella melitensis biotype 1 (strain ATCC 23456 / CCUG 17765 / NCTC 10094 / 16M).